The primary structure comprises 172 residues: Bifunctional protein PyrR (172 aa).

The short motif at 90–102 (LVLIDDVLMSGRT) is the PRPP-binding element.

The protein belongs to the purine/pyrimidine phosphoribosyltransferase family. PyrR subfamily.

It catalyses the reaction UMP + diphosphate = 5-phospho-alpha-D-ribose 1-diphosphate + uracil. In terms of biological role, regulates the transcription of the pyrimidine nucleotide (pyr) operon in response to exogenous pyrimidines. Its function is as follows. Also displays a weak uracil phosphoribosyltransferase activity which is not physiologically significant. This Pseudomonas putida (strain W619) protein is Bifunctional protein PyrR.